We begin with the raw amino-acid sequence, 632 residues long: Chaperone protein HtpG (632 aa).

The a; substrate-binding stretch occupies residues methionine 1–arginine 339. Residues glutamate 340–arginine 559 form a b region. A c region spans residues methionine 560–alanine 632.

The protein belongs to the heat shock protein 90 family. As to quaternary structure, homodimer.

It is found in the cytoplasm. Its function is as follows. Molecular chaperone. Has ATPase activity. This chain is Chaperone protein HtpG, found in Burkholderia lata (strain ATCC 17760 / DSM 23089 / LMG 22485 / NCIMB 9086 / R18194 / 383).